The sequence spans 399 residues: Nicotinate phosphoribosyltransferase (399 aa).

His-221 is subject to Phosphohistidine; by autocatalysis.

This sequence belongs to the NAPRTase family. In terms of processing, transiently phosphorylated on a His residue during the reaction cycle. Phosphorylation strongly increases the affinity for substrates and increases the rate of nicotinate D-ribonucleotide production. Dephosphorylation regenerates the low-affinity form of the enzyme, leading to product release.

The catalysed reaction is nicotinate + 5-phospho-alpha-D-ribose 1-diphosphate + ATP + H2O = nicotinate beta-D-ribonucleotide + ADP + phosphate + diphosphate. It participates in cofactor biosynthesis; NAD(+) biosynthesis; nicotinate D-ribonucleotide from nicotinate: step 1/1. Functionally, catalyzes the synthesis of beta-nicotinate D-ribonucleotide from nicotinate and 5-phospho-D-ribose 1-phosphate at the expense of ATP. This Buchnera aphidicola subsp. Acyrthosiphon pisum (strain 5A) protein is Nicotinate phosphoribosyltransferase.